A 414-amino-acid chain; its full sequence is MANSC domain-containing protein 1 (414 aa).

The signal sequence occupies residues 1-24; sequence MLFRGTSLAYSLLVISFLTPRSSA. At 25 to 369 the chain is on the extracellular side; sequence GQNCLTKSLE…HGLSFEKWLL (345 aa). In terms of domain architecture, MANSC spans 32-116; it reads SLEDVVIDIQ…LKPAKGLVTY (85 aa). 3 N-linked (GlcNAc...) asparagine glycosylation sites follow: Asn128, Asn234, and Asn335. Positions 311–339 are disordered; sequence FQGGSTLTSDPRHGKSSTSESSITNKTAS. The span at 326-338 shows a compositional bias: polar residues; it reads SSTSESSITNKTA. Residues 370–392 form a helical membrane-spanning segment; the sequence is IGTLLCGVLFLVIGLVLLGRMLV. Residues 393–414 are Cytoplasmic-facing; the sequence is EALRRKRYSRLDYLINGIYVDI.

It is found in the membrane. This is MANSC domain-containing protein 1 (Mansc1) from Mus musculus (Mouse).